Consider the following 546-residue polypeptide: MTYGGRDQQYNKTNYNSRGGDFRGGRNSDRNSYNDRPQGGNYRGGFGGRSNYNQPQELIKPNWDEELPKLPTFEKNFYVEHESVRDRSDSEIAQFRKENEMTISGHDIPKPITTFDEAGFPDYVLNEVKAEGFDKPTGIQCQGWPMALSGRDMVGIAATGSGKTLSYCLPGIVHINAQPLLAPGDGPIVLVLAPTRELAVQIQTECSKFGHSSRIRNTCVYGGVPKSQQIRDLSRGSEIVIATPGRLIDMLEIGKTNLKRVTYLVLDEADRMLDMGFEPQIRKIVDQIRPDRQTLMWSATWPKEVKQLAADYLNDPIQVQVGSLELSASHNITQIVEVVSDFEKRDRLNKYLETASQDNEYKTLIFASTKRMCDDITKYLREDGWPALAIHGDKDQRERDWVLQEFRNGRSPIMVATDVAARGIDVKGINYVINYDMPGNIEDYVHRIGRTGRAGATGTAISFFTEQNKGLGAKLISIMREANQNIPPELLKYDRRSYGGGHPRYGGGRGGRGGYGRRGGYGGGRGGYGGNRQRDGGWGNRGRSNY.

A disordered region spans residues 1–56 (MTYGGRDQQYNKTNYNSRGGDFRGGRNSDRNSYNDRPQGGNYRGGFGGRSNYNQPQ). Residues 8-17 (QQYNKTNYNS) are compositionally biased toward polar residues. The span at 20-33 (GDFRGGRNSDRNSY) shows a compositional bias: basic and acidic residues. Phosphoserine is present on residues Ser-88 and Ser-90. The short motif at 113 to 141 (TTFDEAGFPDYVLNEVKAEGFDKPTGIQC) is the Q motif element. In terms of domain architecture, Helicase ATP-binding spans 144-319 (WPMALSGRDM…ADYLNDPIQV (176 aa)). Residue 157 to 164 (AATGSGKT) coordinates ATP. A DEAD box motif is present at residues 267-270 (DEAD). The region spanning 347 to 494 (RLNKYLETAS…NIPPELLKYD (148 aa)) is the Helicase C-terminal domain. A Glycyl lysine isopeptide (Lys-Gly) (interchain with G-Cter in ubiquitin) cross-link involves residue Lys-474. The tract at residues 493-546 (YDRRSYGGGHPRYGGGRGGRGGYGRRGGYGGGRGGYGGNRQRDGGWGNRGRSNY) is disordered. Residues 498 to 540 (YGGGHPRYGGGRGGRGGYGRRGGYGGGRGGYGGNRQRDGGWGN) are compositionally biased toward gly residues.

This sequence belongs to the DEAD box helicase family. DDX5/DBP2 subfamily. As to quaternary structure, associates with polysomes.

The protein resides in the cytoplasm. It is found in the nucleus. The catalysed reaction is ATP + H2O = ADP + phosphate + H(+). Functionally, ATP-dependent RNA helicase involved nonsense-mediated mRNA decay and ribosome biogenesis through rRNA processing. The sequence is that of ATP-dependent RNA helicase DBP2 (DBP2) from Saccharomyces cerevisiae (strain YJM789) (Baker's yeast).